The primary structure comprises 118 residues: Endoribonuclease MazF9 (118 aa).

It belongs to the PemK/MazF family. In terms of assembly, forms a complex with cognate antitoxin MazE9.

Toxic component of a type II toxin-antitoxin (TA) system. Upon expression in E.coli and M.smegmatis inhibits cell growth and colony formation. Its toxic effect is neutralized by coexpression with cognate antitoxin MazE9. Acts as an mRNA interferase, specifically cleaving between U and C in UAC sequences. May cleave its cognate antitoxin's gene. In E.coli expression with non-cognate antitoxins VapB27 and VapB40 partially neutralizes the toxin. The polypeptide is Endoribonuclease MazF9 (mazF9) (Mycobacterium tuberculosis (strain ATCC 25618 / H37Rv)).